The following is a 600-amino-acid chain: Elongation factor 4 (600 aa).

Positions 6 to 188 (QFIRNFSIIA…QITKQIPSPK (183 aa)) constitute a tr-type G domain. GTP contacts are provided by residues 18-23 (DHGKST) and 135-138 (NKID).

The protein belongs to the TRAFAC class translation factor GTPase superfamily. Classic translation factor GTPase family. LepA subfamily.

Its subcellular location is the cell inner membrane. It carries out the reaction GTP + H2O = GDP + phosphate + H(+). Required for accurate and efficient protein synthesis under certain stress conditions. May act as a fidelity factor of the translation reaction, by catalyzing a one-codon backward translocation of tRNAs on improperly translocated ribosomes. Back-translocation proceeds from a post-translocation (POST) complex to a pre-translocation (PRE) complex, thus giving elongation factor G a second chance to translocate the tRNAs correctly. Binds to ribosomes in a GTP-dependent manner. This chain is Elongation factor 4, found in Leptospira interrogans serogroup Icterohaemorrhagiae serovar copenhageni (strain Fiocruz L1-130).